A 171-amino-acid chain; its full sequence is MEEYAREPCPWRIVDDCGGAFTMGTIGGGIFQAFKGFRNSPVGVNHRLRGSLTAIKTRAPQLGGSFAVWGGLFSTIDCGMVQIRGKEDPWNSITSGALTGAILAARNGPVAMVGSAAMGGILLALIEGAGILLTRFASAQFPNGPQFAEDHSQLPSSQLPSSPFGDYRQYQ.

An intrachain disulfide couples Cys9 to Cys78. 3 helical membrane passes run 17–37 (CGGA…FKGF), 63–77 (GGSF…STID), and 113–133 (VGSA…GILL). The segment at 147–171 (FAEDHSQLPSSQLPSSPFGDYRQYQ) is disordered. Low complexity predominate over residues 153–163 (QLPSSQLPSSP).

Belongs to the Tim17/Tim22/Tim23 family. Component of the TIM23 complex at least composed of TIMM23, TIMM17 (TIMM17A or TIMM17B) and TIMM50. The complex interacts with the TIMM44 component of the PAM complex and with DNAJC15. Post-translationally, degraded by YMEL1 downstream of the integrated stress response (ISR).

Its subcellular location is the mitochondrion inner membrane. Its function is as follows. Essential component of the TIM23 complex, a complex that mediates the translocation of transit peptide-containing proteins across the mitochondrial inner membrane. The polypeptide is Mitochondrial import inner membrane translocase subunit Tim17-A (Timm17a) (Rattus norvegicus (Rat)).